Consider the following 439-residue polypeptide: General transcription factor IIE subunit 1 (439 aa).

A2 bears the N-acetylalanine mark. Positions 14–104 (LKRLAKYVIR…NYRTLVNVVK (91 aa)) constitute an HTH TFE/IIEalpha-type domain. N6-acetyllysine is present on K67. Zn(2+)-binding residues include C129, C132, C154, and C157. The C4-type zinc finger occupies 129–157 (CPVCSSTFTDLEANQLFDPMTGTFRCTFC). A Phosphoserine modification is found at S268. Positions 333–344 (SSAMAGSVGAAA) are enriched in low complexity. Positions 333-392 (SSAMAGSVGAAAPVTTANGSDSESETSESDDDSPPRPAAVAVHKREEDEEEDDEFEEVAD) are disordered. Composition is skewed to acidic residues over residues 354-364 (SESETSESDDD) and 379-392 (EDEE…EVAD).

The protein belongs to the TFIIE alpha subunit family. Tetramer of two alpha and two beta chains. Interacts with TAF6/TAFII80. Interacts with ATF7IP. Interacts with SND1. Part of TBP-based Pol II pre-initiation complex (PIC), in which Pol II core assembles with general transcription factors and other specific initiation factors including GTF2E1, GTF2E2, GTF2F1, GTF2F2, TCEA1, ERCC2, ERCC3, GTF2H2, GTF2H3, GTF2H4, GTF2H5, GTF2A1, GTF2A2, GTF2B and TBP; this large multi-subunit PIC complex mediates DNA unwinding and targets Pol II core to the transcription start site where the first phosphodiester bond forms.

The protein localises to the nucleus. In terms of biological role, recruits TFIIH to the initiation complex and stimulates the RNA polymerase II C-terminal domain kinase and DNA-dependent ATPase activities of TFIIH. Both TFIIH and TFIIE are required for promoter clearance by RNA polymerase. The polypeptide is General transcription factor IIE subunit 1 (GTF2E1) (Pongo abelii (Sumatran orangutan)).